A 286-amino-acid polypeptide reads, in one-letter code: Thymidylate synthase (286 aa).

140-141 (RR) lines the dUMP pocket. Cys161 acts as the Nucleophile in catalysis. DUMP is bound by residues 185-188 (RSND), Asn196, and 226-228 (HIY). A (6R)-5,10-methylene-5,6,7,8-tetrahydrofolate-binding site is contributed by Asp188. Ala285 contributes to the (6R)-5,10-methylene-5,6,7,8-tetrahydrofolate binding site.

This sequence belongs to the thymidylate synthase family. Bacterial-type ThyA subfamily. In terms of assembly, homodimer.

The protein resides in the cytoplasm. The catalysed reaction is dUMP + (6R)-5,10-methylene-5,6,7,8-tetrahydrofolate = 7,8-dihydrofolate + dTMP. It functions in the pathway pyrimidine metabolism; dTTP biosynthesis. Its function is as follows. Catalyzes the reductive methylation of 2'-deoxyuridine-5'-monophosphate (dUMP) to 2'-deoxythymidine-5'-monophosphate (dTMP) while utilizing 5,10-methylenetetrahydrofolate (mTHF) as the methyl donor and reductant in the reaction, yielding dihydrofolate (DHF) as a by-product. This enzymatic reaction provides an intracellular de novo source of dTMP, an essential precursor for DNA biosynthesis. This chain is Thymidylate synthase, found in Streptococcus thermophilus (strain ATCC BAA-250 / LMG 18311).